The chain runs to 246 residues: LexA repressor (246 aa).

Residues 1-34 (MATPQTGKKTPSRRVSELPDGPPDATGLTPRQQR) are disordered. Residues 52-72 (MREIGEAVGLTSSSSVAHQLK) constitute a DNA-binding region (H-T-H motif). Residues Ser170 and Lys207 each act as for autocatalytic cleavage activity in the active site.

The protein belongs to the peptidase S24 family. As to quaternary structure, homodimer.

The enzyme catalyses Hydrolysis of Ala-|-Gly bond in repressor LexA.. In terms of biological role, represses a number of genes involved in the response to DNA damage (SOS response), including recA and lexA. In the presence of single-stranded DNA, RecA interacts with LexA causing an autocatalytic cleavage which disrupts the DNA-binding part of LexA, leading to derepression of the SOS regulon and eventually DNA repair. In Nocardioides sp. (strain ATCC BAA-499 / JS614), this protein is LexA repressor.